Reading from the N-terminus, the 282-residue chain is Follicle cell protein 3C-1 (282 aa).

Residues 103-156 (EASTETIGNNGTTETTVGEAPIIGSSEGSTRSMEPTTASPLMSTNPSSSSSLVS) are disordered. Over residues 106–118 (TETIGNNGTTETT) the composition is skewed to low complexity. Residues 128-140 (SEGSTRSMEPTTA) are compositionally biased toward polar residues. Residues 141–156 (SPLMSTNPSSSSSLVS) show a composition bias toward low complexity.

Expressed in follicle cells during vitelline membrane formation.

The protein is Follicle cell protein 3C-1 (Fcp3C) of Drosophila melanogaster (Fruit fly).